The chain runs to 2678 residues: MMGTKVPSYNNKQQSGSNAGGNVNNNNNGPNINNPNNPNNTNSLPTTSGYNSSRFSVPNLDTDNFMTNIISMGVNKVGWALYRSNSNNNNNNINNNSSSSSSSNTSNNINSNTLVNDPILLAYLKTIELGVPCLWRKTRSKKPINNSSNNSNITSSTSTDSSLKNRLKNSPSETTPPNTTNNNSNNVTKDSPPNATNKMSTSPKSLSPTISNNNNNTTAAATTTTTTTNNSSNSPTSPTNNNNNNNNNNSPSSHNVVNSPPSTSSRSPPTVASVTSNTSTIQPISPIINRQTSSHNYQQPQQPYYNHQPLQPIQEYITTYELWVFNISNTSLLDFSHLNNVESGIVNLDNIGCNNSVIVQYLFKSLYNLVEYNMVSNDFIKIGNSFIKSSHILQKQKQSRNDYNNSIISGSVGSKKRLFEDFTNLYIEDDCLLSCSFSFFIYNKSIHLHFNVDKKRLKPLQELMKSEYINSPLFTSPNAFIAFFNNNNKNNINNNSNNIINNNNNSNINNNINNNNNQQQQQQQQQQQQQQQQQQQQQQQQQQQQQQQQQQQQQQQTINNNSNNISSNNDNNNTPSQMVPSIDGHDSSSSSSTPSQVTMQTTPTQEFSNNNNNNISINTTTVPITATTATATNKITTAATTTTTINNNNNKIQTESFGSTRNKKLNDEEEINFSLSSQQWKQLFNIGLANKAIIPKQQTPQQQEQQQIIGTIFKKNQLEVPKSIKTIITRGNSLPLINTFFPIELLFKFFPPISDISQYTYHEKLKEFGLEIFDKSPYALLEKGLNLFINNNNINIENNNNTSNEINNTGTQIPTKYKYVDFWSLPLFHSKESLIYGNDHFNATYCVKAVPSPSSPLTQHPSSPHSPFNNVNSPKSPQHPPSPKTPMISDDDQSLTANNEKKRHGKSQKKGRSSKRKKDDNSNNNNNNNTTTTSTITATTTTTTPTAATTGNDNFLAPQSKPPPSNIQETSQPQSLTTVQPQPPPQQQQQQQQQQQQQQQQQQQQQQQQQQQQQQQQQQQQQQQVVSSFSGQGLNSSMDLFGSDAFDTFKNKEDDLMHLSDTDIDLDLWTSHYVPPNQPTQNGSQKNNQRPLPVEDPFQVFQVPNKPATTTTTTTTTTTPTPNPTTTTTQPQTQPQQQSQQQQQPQQTNPILPTNSNLITNQKPQQYQPPLQDPFQSIDSQQPKSIQSPTLTNQPIGMVSPTLTNQPLQQYQPPPPPTQQPQQAHLKPPPPKQPSAKKNSKDGINSDENKPFLDGQFLCPVPYKAPSLSQNQLPILHLPHNTEQSPSNDDLSNPNHLHHGTPTSAISGVGGSSSSSGNNMIGSGGIVGSGGGNTNVSGSGGGMVSDPSKLTYSSEHHDPHHHHHHHHHHHPQNSQNLRNSYGNSNGVGGSQDESIDGLTTVYRNLTLSRPLGDNKNKNNAPYYCAPSYKPLDEHSLPHQLKFEYSYTPLVKPQNQLNQTKYSPFSNSHHNHHHNTTTNNNNNHNNNNNNNHPNNHHQNNNHHHLNITSSLFQPSNIQNVNSLPNIGSQKIMSISPPITPPMKGGHMIGTDINKNNNKKNNDEDENLEILSTIKQKDVNGLDSNLSSSALLSFFDQAINIKTTPPRSPVLSGYSGGGSNMNNGINGNSGFIGNGNSGFNTISSYQQNNISIEESLDLAFTIQQMTITNYDSTFGFSIDNSPLIKQSIDYYLENWLKIYTETGKVFNHHSLQFLTEESISDALDTVIDPLTTNTILETTVKTLFTFSNEIFKKIFPLSSFPLSIKEFCHLPSITLNNINNNIDLLNSQTYQNTNNSSSGGGIESQQYFSGSSGLNNSNDRNSMIPMDNSDDTSDLMSMDDHNSKNLITGTSLISTTASGAGAAITTNLINQNYEEFEWLPIPKIIVGYKEDWLEVPISTIKFWDKAQLEPYSPKKNITYFVLCPDTTAMRMHVPAFFSDLSCIYETNHLGNHVTQQQSQVQQAAAAAVAASQPTQQSSQHQSQQQQQQAAQQAAAAAAAAAAAQKNSSPFYNGIYYIPSAANTEFNPQTFINSYLLTCIQFGDYLKELSTKYSENNCMVLYIVNPFSDLSQISLSNQNQNQNQNSNSNESQQQQQQQSNNKQKQTQTNEDINHIRNSYLFMSSCFQTIVRDITCNQSLSITIQTIPIEQILFDDHPSIPVSKELAFSVFNKCRRISTISPMNFSINMNNINNMIGNNNSNSNNSSGWYYQLFNKIYEPLFILSNESSSSSSSTISTSTSASTSTSTSNTTTKNQQQQSQSQQSQQQSQQPKQLSTPTTPTTNSVSNSPSLQPQPLQTPNQLQPHQQEQKQQQQIPIIHFSYMLSDDNKWISCTIVDEQGELLENKLIPLAYSQIIGDYIWKDSFQNAWFFLTEIIGLSLSGQPCQVVIGKFGIISMQEYNDWKTTIIHFEDNLEVIKQHQQQSQSQNYSSTIDQIYKIENVIFLNLTLNNNIKSFLTEYLNDSKLSNSNNIKSVSPLSGQSFAIYPESPIMYTYNFPMNDNNDDYNSILNNNNNNILPPLSTSFVITSPSNLSGSVLTPTTTNSNVINNNQSKKEWPFTYMLSIVGIQSLQHQQQQQQQQQQQQQQQHPNIINHQELIRSITRSYHRLSYLNISPRYPDRLSILPIHFSISKRMSRTVCLISPLNPIPPPILFNRCPKLTPNSKQSPSPINSPHLNSNNT.

12 disordered regions span residues 1-52, 140-285, 495-524, 553-615, 852-993, 1070-1253, 1278-1394, 1462-1502, 1806-1838, 2075-2105, 2225-2307, and 2656-2678; these read MMGT…GYNS, SKKP…QPIS, NSNN…QQQQ, QQQQ…NNNI, SPSS…QQQQ, TSHY…KPFL, LPHN…QDES, SPFS…NNHH, FSGS…SMDD, QNQN…QTQT, SSSS…QEQK, and KLTP…SNNT. Composition is skewed to low complexity over residues 15–48, 144–162, and 169–186; these read SGSN…PTTS, INNS…TDSS, and NSPS…NSNN. Residues 187 to 206 are compositionally biased toward polar residues; that stretch reads VTKDSPPNATNKMSTSPKSL. Over residues 207–276 the composition is skewed to low complexity; that stretch reads SPTISNNNNN…SPPTVASVTS (70 aa). Composition is skewed to low complexity over residues 553–573 and 587–615; these read QQQQ…DNNN and SSSS…NNNI. Residues 855–872 show a composition bias toward polar residues; that stretch reads SPLTQHPSSPHSPFNNVN. Basic residues predominate over residues 901 to 916; it reads KKRHGKSQKKGRSSKR. Over residues 922-950 the composition is skewed to low complexity; the sequence is SNNNNNNNTTTTSTITATTTTTTPTAATT. Polar residues-rich tracts occupy residues 966–979 and 1079–1090; these read NIQE…LTTV and PTQNGSQKNNQR. Over residues 1109–1150 the composition is skewed to low complexity; sequence TTTTTTTTTTTPTPNPTTTTTQPQTQPQQQSQQQQQPQQTNP. Residues 1151 to 1195 are compositionally biased toward polar residues; sequence ILPTNSNLITNQKPQQYQPPLQDPFQSIDSQQPKSIQSPTLTNQP. The segment covering 1201 to 1211 has biased composition (low complexity); that stretch reads PTLTNQPLQQY. Residues 1281–1306 show a composition bias toward polar residues; sequence NTEQSPSNDDLSNPNHLHHGTPTSAI. Low complexity predominate over residues 1312 to 1321; that stretch reads SSSSSGNNMI. The span at 1322–1343 shows a compositional bias: gly residues; it reads GSGGIVGSGGGNTNVSGSGGGM. Residues 1359–1371 show a composition bias toward basic residues; it reads PHHHHHHHHHHHP. A compositionally biased stretch (low complexity) spans 1475-1497; the sequence is TTTNNNNNHNNNNNNNHPNNHHQ. Over residues 1806-1819 the composition is skewed to polar residues; that stretch reads FSGSSGLNNSNDRN. Over residues 2658 to 2678 the composition is skewed to polar residues; that stretch reads TPNSKQSPSPINSPHLNSNNT.

Belongs to the Mediator complex subunit 13 family. Component of the Mediator complex.

Its subcellular location is the nucleus. In terms of biological role, component of the Mediator complex, a coactivator involved in the regulated transcription of nearly all RNA polymerase II-dependent genes. Mediator functions as a bridge to convey information from gene-specific regulatory proteins to the basal RNA polymerase II transcription machinery. Mediator is recruited to promoters by direct interactions with regulatory proteins and serves as a scaffold for the assembly of a functional preinitiation complex with RNA polymerase II and the general transcription factors. Required for the starvation-induced activation of the ACA (adenylyl cyclase) expression pathway at the growth/differentiation transition. In Dictyostelium discoideum (Social amoeba), this protein is Mediator of RNA polymerase II transcription subunit 13 (amiB).